Reading from the N-terminus, the 67-residue chain is Conotoxin LiC33 (67 aa).

The N-terminal stretch at 1-22 (MRCVPVFIILLLLSPSAPSVDA) is a signal peptide. Positions 23–48 (HPKTKDDVPLASFHDDAKRTLQRLWI) are excised as a propeptide. Phe-63 is subject to Phenylalanine amide. A propeptide spanning residues 65–67 (KGK) is cleaved from the precursor.

This sequence belongs to the conotoxin T superfamily. Post-translationally, contains 2 disulfide bonds that can be either 'C1-C3, C2-C4' or 'C1-C4, C2-C3', since these disulfide connectivities have been observed for conotoxins with cysteine framework V (for examples, see AC P0DQQ7 and AC P81755). In terms of tissue distribution, expressed by the venom duct.

The protein resides in the secreted. The chain is Conotoxin LiC33 from Conus lividus (Livid cone).